The sequence spans 241 residues: Small ribosomal subunit protein uS3 (241 aa).

A KH type-2 domain is found at 39–107; it reads IRTYLKKELY…PLSVNIKEEK (69 aa). The segment at 214 to 241 is disordered; sequence AEVKEEQQKEGARRPKRAPKRENSGKAE. Positions 215–226 are enriched in basic and acidic residues; it reads EVKEEQQKEGAR.

This sequence belongs to the universal ribosomal protein uS3 family. Part of the 30S ribosomal subunit. Forms a tight complex with proteins S10 and S14.

In terms of biological role, binds the lower part of the 30S subunit head. Binds mRNA in the 70S ribosome, positioning it for translation. This is Small ribosomal subunit protein uS3 from Sulfurimonas denitrificans (strain ATCC 33889 / DSM 1251) (Thiomicrospira denitrificans (strain ATCC 33889 / DSM 1251)).